The primary structure comprises 449 residues: Glutamyl-tRNA reductase (449 aa).

Residues 58-61 (TCNR), Ser-121, 126-128 (ETQ), and Gln-132 contribute to the substrate site. Residue Cys-59 is the Nucleophile of the active site. 203-208 (GLGEMA) contributes to the NADP(+) binding site.

It belongs to the glutamyl-tRNA reductase family. In terms of assembly, homodimer.

The enzyme catalyses (S)-4-amino-5-oxopentanoate + tRNA(Glu) + NADP(+) = L-glutamyl-tRNA(Glu) + NADPH + H(+). It functions in the pathway porphyrin-containing compound metabolism; protoporphyrin-IX biosynthesis; 5-aminolevulinate from L-glutamyl-tRNA(Glu): step 1/2. Catalyzes the NADPH-dependent reduction of glutamyl-tRNA(Glu) to glutamate 1-semialdehyde (GSA). In Helicobacter pylori (strain HPAG1), this protein is Glutamyl-tRNA reductase.